The primary structure comprises 215 residues: Peptide methionine sulfoxide reductase MsrA (215 aa).

The active site involves C58.

Belongs to the MsrA Met sulfoxide reductase family.

The enzyme catalyses L-methionyl-[protein] + [thioredoxin]-disulfide + H2O = L-methionyl-(S)-S-oxide-[protein] + [thioredoxin]-dithiol. It carries out the reaction [thioredoxin]-disulfide + L-methionine + H2O = L-methionine (S)-S-oxide + [thioredoxin]-dithiol. Has an important function as a repair enzyme for proteins that have been inactivated by oxidation. Catalyzes the reversible oxidation-reduction of methionine sulfoxide in proteins to methionine. The protein is Peptide methionine sulfoxide reductase MsrA of Pseudomonas aeruginosa (strain UCBPP-PA14).